A 1286-amino-acid polypeptide reads, in one-letter code: DNA-directed RNA polymerase 147 kDa polypeptide (1286 aa).

Belongs to the poxviridae DNA-directed RNA polymerase 147 kDa subunit family. As to quaternary structure, the DNA-dependent RNA polymerase used for intermediate and late genes expression consists of eight subunits Rpo30/OPG66, Rpo7/OPG90, Rpo22/OPG103, Rpo147/OPG105, Rpo18/OPG119, Rpo19/OPG131, Rpo132/OPG151 and Rpo35/OPG156. The same holoenzyme, with the addition of the transcription-specificity factor OPG109, is used for early gene expression.

Its subcellular location is the virion. The enzyme catalyses RNA(n) + a ribonucleoside 5'-triphosphate = RNA(n+1) + diphosphate. Part of the DNA-dependent RNA polymerase which catalyzes the transcription of viral DNA into RNA using the four ribonucleoside triphosphates as substrates. Responsible for the transcription of early, intermediate and late genes. DNA-dependent RNA polymerase associates with the early transcription factor (ETF), itself composed of OPG118 and OPG133, thereby allowing the early genes transcription. Late transcription, and probably also intermediate transcription, require newly synthesized RNA polymerase. The sequence is that of DNA-directed RNA polymerase 147 kDa polypeptide (OPG105) from Monkeypox virus.